The sequence spans 85 residues: Large ribosomal subunit protein bL27 (85 aa).

A disordered region spans residues Met-1–Gly-22.

It belongs to the bacterial ribosomal protein bL27 family.

The protein is Large ribosomal subunit protein bL27 of Vibrio atlanticus (strain LGP32) (Vibrio splendidus (strain Mel32)).